We begin with the raw amino-acid sequence, 155 residues long: D-aminoacyl-tRNA deacylase (155 aa).

Residues 147–148 (GP) carry the Gly-cisPro motif, important for rejection of L-amino acids motif.

Belongs to the DTD family. Homodimer.

The protein localises to the cytoplasm. It catalyses the reaction glycyl-tRNA(Ala) + H2O = tRNA(Ala) + glycine + H(+). It carries out the reaction a D-aminoacyl-tRNA + H2O = a tRNA + a D-alpha-amino acid + H(+). Its function is as follows. An aminoacyl-tRNA editing enzyme that deacylates mischarged D-aminoacyl-tRNAs. Also deacylates mischarged glycyl-tRNA(Ala), protecting cells against glycine mischarging by AlaRS. Acts via tRNA-based rather than protein-based catalysis; rejects L-amino acids rather than detecting D-amino acids in the active site. By recycling D-aminoacyl-tRNA to D-amino acids and free tRNA molecules, this enzyme counteracts the toxicity associated with the formation of D-aminoacyl-tRNA entities in vivo and helps enforce protein L-homochirality. This is D-aminoacyl-tRNA deacylase from Corynebacterium urealyticum (strain ATCC 43042 / DSM 7109).